A 456-amino-acid chain; its full sequence is Chordin-like protein 1 (456 aa).

A signal peptide spans 1–28 (MRRKWRSEDFHFVFFGVLCLLLIDRGKL). 3 consecutive VWFC domains span residues 36 to 101 (TYCV…PRCP), 115 to 181 (KSCE…PVCR), and 262 to 327 (RVCV…KVCP). An N-linked (GlcNAc...) asparagine glycan is attached at Asn120. The Cell attachment site motif lies at 181 to 183 (RGD). N-linked (GlcNAc...) asparagine glycosylation is present at Asn295.

As to expression, mainly expressed in the ventral retina.

It localises to the secreted. Its function is as follows. Seems to antagonize the function of BMP4 by binding to it and preventing its interaction with receptors. This chain is Chordin-like protein 1 (CHRDL1), found in Gallus gallus (Chicken).